Here is a 328-residue protein sequence, read N- to C-terminus: D-cysteine desulfhydrase (328 aa).

Residue Lys-51 is modified to N6-(pyridoxal phosphate)lysine.

Belongs to the ACC deaminase/D-cysteine desulfhydrase family. Homodimer. Requires pyridoxal 5'-phosphate as cofactor.

It carries out the reaction D-cysteine + H2O = hydrogen sulfide + pyruvate + NH4(+) + H(+). Functionally, catalyzes the alpha,beta-elimination reaction of D-cysteine and of several D-cysteine derivatives. It could be a defense mechanism against D-cysteine. The chain is D-cysteine desulfhydrase from Salmonella typhi.